The following is a 660-amino-acid chain: DNA ligase (660 aa).

Residues 33-37 (DFVYD), 82-83 (SL), and Glu110 contribute to the NAD(+) site. Lys112 serves as the catalytic N6-AMP-lysine intermediate. Residues Arg133, Glu167, Lys281, and Lys305 each contribute to the NAD(+) site. Positions 396, 399, 412, and 417 each coordinate Zn(2+). Positions 583–660 (DENKLLVGKK…SFEDIKSYLD (78 aa)) constitute a BRCT domain.

This sequence belongs to the NAD-dependent DNA ligase family. LigA subfamily. It depends on Mg(2+) as a cofactor. The cofactor is Mn(2+).

It carries out the reaction NAD(+) + (deoxyribonucleotide)n-3'-hydroxyl + 5'-phospho-(deoxyribonucleotide)m = (deoxyribonucleotide)n+m + AMP + beta-nicotinamide D-nucleotide.. Its function is as follows. DNA ligase that catalyzes the formation of phosphodiester linkages between 5'-phosphoryl and 3'-hydroxyl groups in double-stranded DNA using NAD as a coenzyme and as the energy source for the reaction. It is essential for DNA replication and repair of damaged DNA. The polypeptide is DNA ligase (Borreliella afzelii (strain PKo) (Borrelia afzelii)).